The primary structure comprises 218 residues: Small ribosomal subunit protein uS3c (218 aa).

Residues 47-118 enclose the KH type-2 domain; sequence VQKNIRISSG…KLNIAITRIS (72 aa).

The protein belongs to the universal ribosomal protein uS3 family. In terms of assembly, part of the 30S ribosomal subunit.

It localises to the plastid. The protein localises to the chloroplast. The polypeptide is Small ribosomal subunit protein uS3c (rps3) (Arabis hirsuta (Hairy rock-cress)).